A 481-amino-acid polypeptide reads, in one-letter code: 3-isopropylmalate dehydratase large subunit (481 aa).

The [4Fe-4S] cluster site is built by Cys355, Cys415, and Cys418.

It belongs to the aconitase/IPM isomerase family. LeuC type 1 subfamily. In terms of assembly, heterodimer of LeuC and LeuD. [4Fe-4S] cluster serves as cofactor.

It catalyses the reaction (2R,3S)-3-isopropylmalate = (2S)-2-isopropylmalate. Its pathway is amino-acid biosynthesis; L-leucine biosynthesis; L-leucine from 3-methyl-2-oxobutanoate: step 2/4. Catalyzes the isomerization between 2-isopropylmalate and 3-isopropylmalate, via the formation of 2-isopropylmaleate. The sequence is that of 3-isopropylmalate dehydratase large subunit from Symbiobacterium thermophilum (strain DSM 24528 / JCM 14929 / IAM 14863 / T).